We begin with the raw amino-acid sequence, 1158 residues long: Formin-C (1158 aa).

Disordered stretches follow at residues 8 to 29 (INGNEHRTSSTPQQPQQNPSVS), 417 to 523 (PNTS…LSCL), and 990 to 1052 (INNN…NNSQ). In terms of domain architecture, GBD/FH3 spans 20-388 (QQPQQNPSVS…EYSQRKLEMI (369 aa)). Residues 417–437 (PNTSDLFDSSTLEDTYDGNND) are compositionally biased toward polar residues. Positions 438 to 481 (TNSCTSISTSSTPIHISQPTTLIVPSTTPNHPPQQSQQTPPLQL) are enriched in low complexity. Residues 479 to 515 (LQLQKEKEKEKEKEKEKEKEKEKEQQQQQQQSNKQST) adopt a coiled-coil conformation. Positions 482-503 (QKEKEKEKEKEKEKEKEKEKEQ) are enriched in basic and acidic residues. Positions 601 to 998 (TKSPITPSKR…IINNNNNNNN (398 aa)) constitute an FH2 domain. Residues 1134 to 1158 (SDDPMAVIIEALKTGSPNDMVKRAF) form the DAD domain.

It belongs to the formin homology family. Diaphanous subfamily. Interacts (via GBD/FH3 domain) with activated Rho-GTPases.

It localises to the cytoplasm. The protein localises to the cytosol. It is found in the cytoskeleton. Functionally, formins play an important role in the nucleation of actin and the formation of linear actin filaments. The chain is Formin-C (forC) from Dictyostelium discoideum (Social amoeba).